The following is a 318-amino-acid chain: MLTKEFAQRVELSEKQVRKIVQHLEERGYQLSKTEYRGREATDFKEEDIELFKDIADKVKQTNSYDLAFDELEKEKDFLQVIVKNDDKNLPTNQNVAQLVEDLRLEIQKMREERHLLGQMMNQVHQQQQELKELQNQLTSKIDSNSESLKAIQTSQEAIQEAQASQAKVLAESTNKVEKNAVTEDKADSKDSKVAGVNTSTDAKTDTKAENAGDGTATKVDKEDQISATEAIEKASVEQSKNENAAETSNKEATVDADAQHDAEQQVAEAHAEASKQATSNDSLEAKAENDSTASQSEMSEPKPQEEKKGFFARLFNL.

Residues 67 to 157 adopt a coiled-coil conformation; it reads LAFDELEKEK…SLKAIQTSQE (91 aa). The disordered stretch occupies residues 172–318; it reads ESTNKVEKNA…KGFFARLFNL (147 aa). 2 stretches are compositionally biased toward basic and acidic residues: residues 175–193 and 219–236; these read NKVE…KDSK and KVDK…EKAS. Over residues 237–248 the composition is skewed to polar residues; that stretch reads VEQSKNENAAET. 2 stretches are compositionally biased toward basic and acidic residues: residues 249-274 and 300-310; these read SNKE…HAEA and SEPKPQEEKKG.

This is an uncharacterized protein from Staphylococcus aureus (strain Mu50 / ATCC 700699).